A 202-amino-acid chain; its full sequence is Imidazoleglycerol-phosphate dehydratase (202 aa).

It belongs to the imidazoleglycerol-phosphate dehydratase family.

It localises to the cytoplasm. It carries out the reaction D-erythro-1-(imidazol-4-yl)glycerol 3-phosphate = 3-(imidazol-4-yl)-2-oxopropyl phosphate + H2O. It participates in amino-acid biosynthesis; L-histidine biosynthesis; L-histidine from 5-phospho-alpha-D-ribose 1-diphosphate: step 6/9. This is Imidazoleglycerol-phosphate dehydratase from Mycolicibacterium gilvum (strain PYR-GCK) (Mycobacterium gilvum (strain PYR-GCK)).